Reading from the N-terminus, the 688-residue chain is Glycine--tRNA ligase beta subunit (688 aa).

The protein belongs to the class-II aminoacyl-tRNA synthetase family. As to quaternary structure, tetramer of two alpha and two beta subunits.

The protein resides in the cytoplasm. It carries out the reaction tRNA(Gly) + glycine + ATP = glycyl-tRNA(Gly) + AMP + diphosphate. The polypeptide is Glycine--tRNA ligase beta subunit (Shewanella sp. (strain MR-7)).